The primary structure comprises 621 residues: ATP-dependent lipid A-core flippase (621 aa).

The next 5 helical transmembrane spans lie at I32–F52, V91–I111, I192–L212, S286–W306, and Y312–I332. Residues V33–T344 form the ABC transmembrane type-1 domain. The ABC transporter domain maps to F378–I611. An ATP-binding site is contributed by G410–S417.

The protein belongs to the ABC transporter superfamily. Lipid exporter (TC 3.A.1.106) family. Homodimer.

It is found in the cell inner membrane. It carries out the reaction ATP + H2O + lipid A-core oligosaccharideSide 1 = ADP + phosphate + lipid A-core oligosaccharideSide 2.. Involved in lipopolysaccharide (LPS) biosynthesis. Translocates lipid A-core from the inner to the outer leaflet of the inner membrane. Transmembrane domains (TMD) form a pore in the inner membrane and the ATP-binding domain (NBD) is responsible for energy generation. In Neisseria meningitidis serogroup B (strain ATCC BAA-335 / MC58), this protein is ATP-dependent lipid A-core flippase.